Reading from the N-terminus, the 382-residue chain is Na(+)/H(+) antiporter NhaA (382 aa).

11 helical membrane passes run 13 to 33 (IGGILLFIAAVIAIIIANSPF), 58 to 78 (LLLWINDGLMAIYFLLIGLEI), 94 to 114 (LVPALTALAGLIFPALIFIFF), 124 to 144 (GWAIPTATDIAFTLGIVSLLG), 153 to 173 (ILLTAIAIFDDIAAIVIIALF), 179 to 199 (SLLSLSLALVFTLILIGLNYF), 204 to 224 (ISVFMLFGVALWIAVLKSGVH), 256 to 276 (VVFLILPLFAFANAGVSFVGL), 285 to 305 (VVLGIGLGLFLGKQLGIFLSL), 325 to 345 (VYGIALICGVGFTMSLFIGSL), and 357 to 377 (MVKIGVVLGSFIAGLTGFLVL).

It belongs to the NhaA Na(+)/H(+) (TC 2.A.33) antiporter family.

It localises to the cell inner membrane. It catalyses the reaction Na(+)(in) + 2 H(+)(out) = Na(+)(out) + 2 H(+)(in). Its function is as follows. Na(+)/H(+) antiporter that extrudes sodium in exchange for external protons. The polypeptide is Na(+)/H(+) antiporter NhaA (Legionella pneumophila (strain Paris)).